The chain runs to 294 residues: Flavin-dependent thymidylate synthase (294 aa).

The 224-residue stretch at 27–250 folds into the ThyX domain; the sequence is GFIRVIDYMG…PFTYEAFEEY (224 aa). Residues Thr73, 96–98, and Glu104 each bind FAD; that span reads RHR. DUMP-binding positions include 93–96, 104–108, and Arg189; these read QWIR and EYSAR. Positions 96-106 match the ThyX motif motif; that stretch reads RHRTASVNEYS. Residues 205–207 and His211 each bind FAD; that span reads NLH. Residue Arg216 coordinates dUMP. Residue Arg216 is the Involved in ionization of N3 of dUMP, leading to its activation of the active site.

The protein belongs to the thymidylate synthase ThyX family. As to quaternary structure, homotetramer. The cofactor is FAD.

The enzyme catalyses dUMP + (6R)-5,10-methylene-5,6,7,8-tetrahydrofolate + NADPH + H(+) = dTMP + (6S)-5,6,7,8-tetrahydrofolate + NADP(+). The protein operates within pyrimidine metabolism; dTTP biosynthesis. Catalyzes the reductive methylation of 2'-deoxyuridine-5'-monophosphate (dUMP) to 2'-deoxythymidine-5'-monophosphate (dTMP) while utilizing 5,10-methylenetetrahydrofolate (mTHF) as the methyl donor, and NADPH and FADH(2) as the reductant. This Rickettsia typhi (strain ATCC VR-144 / Wilmington) protein is Flavin-dependent thymidylate synthase.